The following is a 619-amino-acid chain: Chaperone protein HscA homolog (619 aa).

Belongs to the heat shock protein 70 family.

In terms of biological role, chaperone involved in the maturation of iron-sulfur cluster-containing proteins. Has a low intrinsic ATPase activity which is markedly stimulated by HscB. The sequence is that of Chaperone protein HscA homolog from Shewanella denitrificans (strain OS217 / ATCC BAA-1090 / DSM 15013).